The following is a 425-amino-acid chain: Trigger factor (425 aa).

Residues 163–248 form the PPIase FKBP-type domain; the sequence is GDTAVIDFEG…VHEIKTKELP (86 aa).

This sequence belongs to the FKBP-type PPIase family. Tig subfamily.

The protein resides in the cytoplasm. The enzyme catalyses [protein]-peptidylproline (omega=180) = [protein]-peptidylproline (omega=0). Functionally, involved in protein export. Acts as a chaperone by maintaining the newly synthesized protein in an open conformation. Functions as a peptidyl-prolyl cis-trans isomerase. The protein is Trigger factor of Bacillus cereus (strain ATCC 10987 / NRS 248).